Here is a 486-residue protein sequence, read N- to C-terminus: Glycogen synthase (486 aa).

An ADP-alpha-D-glucose-binding site is contributed by lysine 15.

It belongs to the glycosyltransferase 1 family. Bacterial/plant glycogen synthase subfamily.

It carries out the reaction [(1-&gt;4)-alpha-D-glucosyl](n) + ADP-alpha-D-glucose = [(1-&gt;4)-alpha-D-glucosyl](n+1) + ADP + H(+). The protein operates within glycan biosynthesis; glycogen biosynthesis. Functionally, synthesizes alpha-1,4-glucan chains using ADP-glucose. In Thermotoga petrophila (strain ATCC BAA-488 / DSM 13995 / JCM 10881 / RKU-1), this protein is Glycogen synthase.